The primary structure comprises 552 residues: 2-methyl-1,2-propanediol dehydrogenase (552 aa).

Belongs to the GMC oxidoreductase family. It depends on FAD as a cofactor.

The protein localises to the cytoplasm. It catalyses the reaction 2-methylpropane-1,2-diol + NAD(+) = 2-hydroxy-2-methylpropanal + NADH + H(+). Its function is as follows. Involved in the degradation of methyl tert-butyl ether (MTBE). Catalyzes the conversion of 2-methyl 1,2-propanediol (2-M1,2-PD) to hydroxyisobutyraldehyde. The sequence is that of 2-methyl-1,2-propanediol dehydrogenase from Mycolicibacterium austroafricanum (Mycobacterium austroafricanum).